A 388-amino-acid polypeptide reads, in one-letter code: Cell adhesion molecule 4 (388 aa).

The N-terminal stretch at 1 to 20 (MGRARRFQWPLLLLWAAAAG) is a signal peptide. Residues 21-119 (PGTAQEVQTE…DTHHQIATLT (99 aa)) form the Ig-like V-type domain. Residues 25–324 (QEVQTENVTV…VEAQTSVPYA (300 aa)) lie on the Extracellular side of the membrane. 2 N-linked (GlcNAc...) asparagine glycosylation sites follow: asparagine 31 and asparagine 67. Intrachain disulfides connect cysteine 44-cysteine 104, cysteine 145-cysteine 199, and cysteine 245-cysteine 291. Ig-like C2-type domains are found at residues 124–219 (PENP…YVLD) and 224–307 (PTAR…YVLV). Asparagine 286 carries N-linked (GlcNAc...) asparagine glycosylation. The chain crosses the membrane as a helical span at residues 325 to 345 (IVGGILALLVFLIICVLVGMV). The Cytoplasmic portion of the chain corresponds to 346-388 (WCSVRQKGSYLTHEASGLDEQGEAREAFLNGSDGHKRKEEFFI). Serine 361 is modified (phosphoserine).

Belongs to the nectin family. In terms of assembly, monomer and homodimer. N-glycosylated.

Its subcellular location is the membrane. Functionally, involved in the cell-cell adhesion. Has calcium- and magnesium-independent cell-cell adhesion activity. May have tumor-suppressor activity. This Rattus norvegicus (Rat) protein is Cell adhesion molecule 4 (Cadm4).